We begin with the raw amino-acid sequence, 137 residues long: Large ribosomal subunit protein uL16 (137 aa).

The protein belongs to the universal ribosomal protein uL16 family. Part of the 50S ribosomal subunit.

Its function is as follows. Binds 23S rRNA and is also seen to make contacts with the A and possibly P site tRNAs. This is Large ribosomal subunit protein uL16 from Streptococcus mutans serotype c (strain ATCC 700610 / UA159).